We begin with the raw amino-acid sequence, 258 residues long: GCN5-related N-acetyltransferase 2, chloroplastic (258 aa).

The N-terminal 58 residues, 1–58 (MLLIPISSSSSSSISPPPNSYPSNHHSLFFSNLTFPIQHGSRKLKTLRLRANFWESIR), are a transit peptide targeting the chloroplast. An interaction with begomoviruses NSP protein region spans residues 107-194 (IIFSSGGEID…DHAFNATIWD (88 aa)). Residues 107 to 258 (IIFSSGGEID…GIKGMFWYPK (152 aa)) enclose the N-acetyltransferase domain. Residues 195 to 197 (VLV), 203 to 208 (GQGLGK), 231 to 233 (DSQ), and Tyr-238 contribute to the acetyl-CoA site. Tyr-238 serves as the catalytic Proton donor.

This sequence belongs to the acetyltransferase family. GNAT subfamily. As to quaternary structure, oligomer. Interacts with begomoviruses NSP but not with CP. This interaction may allow NSP to recruit NSI monomers to acetylate viral genome-bound CP and thus regulate nuclear export of viral genome by NSP. S-sulfhydrated and activated by hydrogen sulfide H(2)S to promote melatonin accumulation and subsequent melatonin-dependent stomotal closure to combat osmotic stress. In terms of processing, autoacetylated. Highly expressed in cauline leaves and seeds, at lower levels in stems, siliques, inflorescences and rosettes leaves and at very low levels in roots. Expressed in the xylem parenchyma and phloem of the leaves and root, and in guard cells of young leaves.

Its subcellular location is the plastid. The protein resides in the chloroplast. It catalyses the reaction 5-methoxytryptamine + acetyl-CoA = melatonin + CoA + H(+). It carries out the reaction L-lysyl-[histone] + acetyl-CoA = N(6)-acetyl-L-lysyl-[histone] + CoA + H(+). The enzyme catalyses L-lysyl-[protein] + acetyl-CoA = N(6)-acetyl-L-lysyl-[protein] + CoA + H(+). The catalysed reaction is serotonin + acetyl-CoA = N-acetylserotonin + CoA + H(+). It catalyses the reaction N-terminal L-alanyl-[protein] + acetyl-CoA = N-terminal N(alpha)-acetyl-L-alanyl-[protein] + CoA + H(+). It carries out the reaction N-terminal L-seryl-[protein] + acetyl-CoA = N-terminal N(alpha)-acetyl-L-seryl-[protein] + CoA + H(+). The enzyme catalyses N-terminal L-valyl-[protein] + acetyl-CoA = N-terminal N(alpha)-acetyl-L-valyl-[protein] + CoA + H(+). The catalysed reaction is N-terminal glycyl-[protein] + acetyl-CoA = N-terminal N(alpha)-acetylglycyl-[protein] + CoA + H(+). It catalyses the reaction an N-terminal L-alpha-aminoacyl-[protein] + acetyl-CoA = N-terminal N(alpha)-acetyl-L-alpha-aminoacyl-[protein] + CoA + H(+). It carries out the reaction N-terminal L-threonyl-[protein] + acetyl-CoA = N-terminal N(alpha)-acetyl-L-threonyl-[protein] + CoA + H(+). The enzyme catalyses N-terminal L-methionyl-[protein] + acetyl-CoA = N-terminal N(alpha)-acetyl-L-methionyl-[protein] + CoA + H(+). The catalysed reaction is N-terminal L-leucyl-[protein] + acetyl-CoA = N-terminal N(alpha)-acetyl-L-leucyl-[protein] + CoA + H(+). Its activity is regulated as follows. Inhibited by the viral nuclear shuttle protein (NSP) that binds to the region required for oligomerization. In terms of biological role, protein acetyltransferase with dual specificity triggering both N-alpha-acetylation (NTA), with a preference for alanine, serine, threonine, methionine and to a lower extent valine as substrates (can also use glycine and leucine), and epsilon-lysine acetylation (KA) of several plastid proteins. Triggers lysine acetylation in KEA1 and KEA2. Acetylates in vitro histones H2A and H3. Does not act as a transcriptional activator but required for the dynamic reorganization of thylakoid protein complexes and grana during photosynthetic state transitions. Involved in melatonin biosynthesis by catalyzing the formation of N-acetylserotonin (NAS) from serotonin and of melatonin (N-acetyl-5-methoxytryptamine) from 5-methoxytryptamine (5-MT). By triggering melatonin biosynthesis, contributes to the chloroplast protein quality control (CPQC), which plays a pivotal role in starch synthesis, and confers melatonin-associated tolerance to high light (HL) stress. Prevents the accumulation of oil and anthocyanin content in mature seeds and avoids seed germination in a melatonin-dependent manner, but promotes mucilage production in the seed coat. Contributes to melatonin-mediated anthocyanin production in cold-exposed seedlings. Implicated in melatonin-monitored circadian dynamics of stomatal aperture to minimize night water loss and promote drought tolerance, partly by triggering hydrogen sulfide H(2)S-dependent stomotal closure in response to osmotic stress. Functionally, (Microbial infection) Required for begomovirus infection and systemic spread. In case of begomoviruses infection, acetylates the capsid protein (CP), but not the nuclear shuttle protein (NSP). Stimulates melatonin-triggered defense responses to the necrotrophic Botrytis cinerea. In Arabidopsis thaliana (Mouse-ear cress), this protein is GCN5-related N-acetyltransferase 2, chloroplastic.